The following is a 452-amino-acid chain: SAGA complex/transcription factor TFIID complex subunit Taf6 (452 aa).

The Histone-fold domain maps to 4–68; sequence TVWNIESIKD…TSADISSALR (65 aa).

Belongs to the TAF6 family. Component of the 1.8 MDa SAGA (Spt-Ada-Gcn5 acetyltransferase) complex, which is composed of 19 subunits tra1, spt7, taf5, ngg1/ada3, sgf73, spt20, spt8, taf12, taf6, hfi1/ada1, ubp8, gcn5, ada2, spt3, sgf29, taf10, taf9, sgf11 and sus1. The SAGA complex is composed of 4 modules, namely the HAT (histone acetyltransferase) module (gcn5, ada2, ngg1/ada3 and sgf29), the DUB (deubiquitinating) module (ubp8, sgf11, sgf73 and sus1), the core or TAF (TBP-associated factor) module (taf5, taf6, taf9, taf10 and taf12), and the Tra1 or SPT (Suppressor of Ty) module (tra1, hfi1/ada1, spt3, spt7, spt8 and spt20). The Tra1/SPT module binds activators, the core module recruits TBP (TATA-binding protein), the HAT module contains the histone H3 acetyltransferase gcn5, and the DUB module comprises the histone H2B deubiquitinase ubp8. Interacts with gcn5, taf5 and taf73. Component of the 1.2 MDa TFIID complex, which is composed of TATA-binding protein (TBP) and the 14 TBP-associated factors (TAFs). It comprises 1 copy of each taf1, taf2, taf3, taf7, taf8, taf11, taf13, 2 copies of each taf4, taf5, taf6, taf9, taf10, taf12, and 3 copies of taf14. In TFIID, taf6 heterodimerizes with taf9, forming ultimately an octamer consisting of a taf6-taf9 heterotetramer core flanked by taf4-taf12 dimers on either side, similar to the histone H2A-H2B-H3-H4 octamer.

Its subcellular location is the nucleus. Functions as a component of both the DNA-binding general transcription initiation factor complex TFIID and the transcription coactivator SAGA complex. Binding of TFIID to a promoter (with or without TATA element) is the initial step in pre-initiation complex (PIC) formation. TFIID plays a key role in the regulation of gene expression by RNA polymerase II through different activities such as transcription activator interaction, core promoter recognition and selectivity, TFIIA and TFIIB interaction, chromatin modification (histone acetylation by TAF1), facilitation of DNA opening and initiation of transcription. SAGA acts as a general cofactor required for essentially all RNA polymerase II transcription. At the promoters, SAGA is required for transcription pre-initiation complex (PIC) recruitment. It influences RNA polymerase II transcriptional activity through different activities such as TBP interaction (via core/TAF module) and promoter selectivity, interaction with transcription activators (via Tra1/SPT module), and chromatin modification through histone acetylation (via HAT module) and deubiquitination (via DUB module). SAGA preferentially acetylates histones H3 (to form H3K9ac, H3K14ac, H3K18ac and H3K23ac) and H2B and deubiquitinates histone H2B. SAGA interacts with DNA via upstream activating sequences (UASs). The protein is SAGA complex/transcription factor TFIID complex subunit Taf6 of Schizosaccharomyces pombe (strain 972 / ATCC 24843) (Fission yeast).